Reading from the N-terminus, the 276-residue chain is Rhomboid-type serine protease 2 (276 aa).

Helical transmembrane passes span 27 to 47, 77 to 97, 109 to 129, 132 to 152, and 175 to 195; these read LPLF…LTLV, FPFI…FTPL, TSVA…YVFV, FILH…LLLG, and WITP…SSFL. Ser144 functions as the Nucleophile in the catalytic mechanism. His197 is a catalytic residue. Residues 198–218 traverse the membrane as a helical segment; that stretch reads LAGLLVGYGFGLGYLKFLAPP.

It belongs to the peptidase S54 family.

The protein localises to the golgi apparatus membrane. Its subcellular location is the golgi apparatus. It localises to the cis-Golgi network membrane. The enzyme catalyses Cleaves type-1 transmembrane domains using a catalytic dyad composed of serine and histidine that are contributed by different transmembrane domains.. In terms of biological role, probable rhomboid-type serine protease that catalyzes intramembrane proteolysis. The chain is Rhomboid-type serine protease 2 (rbd-2) from Neurospora crassa (strain ATCC 24698 / 74-OR23-1A / CBS 708.71 / DSM 1257 / FGSC 987).